A 236-amino-acid chain; its full sequence is Ribonuclease 3 (236 aa).

The RNase III domain occupies 13–138; the sequence is TEKVFKISGY…LIGAIYVDGG (126 aa). Glutamate 51 lines the Mg(2+) pocket. The active site involves aspartate 55. Mg(2+) is bound by residues asparagine 124 and glutamate 127. The active site involves glutamate 127. The DRBM domain maps to 164–232; sequence DAKTALQEWA…AKLMLEKVTK (69 aa).

This sequence belongs to the ribonuclease III family. As to quaternary structure, homodimer. The cofactor is Mg(2+).

Its subcellular location is the cytoplasm. The enzyme catalyses Endonucleolytic cleavage to 5'-phosphomonoester.. Functionally, digests double-stranded RNA. Involved in the processing of primary rRNA transcript to yield the immediate precursors to the large and small rRNAs (23S and 16S). Processes some mRNAs, and tRNAs when they are encoded in the rRNA operon. Processes pre-crRNA and tracrRNA of type II CRISPR loci if present in the organism. This chain is Ribonuclease 3, found in Anaplasma phagocytophilum (strain HZ).